The primary structure comprises 504 residues: Acid phosphatase A (504 aa).

The signal sequence occupies residues M1 to A22. N84, N112, N168, N260, N415, N450, and N474 each carry an N-linked (GlcNAc...) asparagine glycan.

Belongs to the metallophosphoesterase superfamily. Purple acid phosphatase family. In terms of assembly, monomer.

The protein localises to the secreted. The catalysed reaction is a phosphate monoester + H2O = an alcohol + phosphate. Functionally, acid phosphatase involved in the regulation of fungal phenotypic traits and virulence in C.parasitica. The polypeptide is Acid phosphatase A (Cryphonectria parasitica (strain ATCC 38755 / EP155)).